The chain runs to 256 residues: uncharacterized protein (256 aa).

The stretch at 213–243 (TMSMEAKLEAAKKTLEKFKQEAASKRAKRTK) forms a coiled coil. The tract at residues 231-256 (KQEAASKRAKRTKPSGSKTTRSTGRK) is disordered. Residues 244–256 (PSGSKTTRSTGRK) are compositionally biased toward polar residues.

This is an uncharacterized protein from Acanthamoeba polyphaga (Amoeba).